A 198-amino-acid chain; its full sequence is Glycerol-3-phosphate acyltransferase (198 aa).

A run of 5 helical transmembrane segments spans residues 1–21 (MTIIIIVLSYFLGSIPTGFLF), 77–97 (HLFEVLAGISAVSGHIWPIWL), 111–131 (MFIALSWKVGFASLGIFLIIL), 136–156 (IVSLSSILAAFFLPLFMFLDI), and 157–177 (GVTNHPYFLISLVVSILVILK).

This sequence belongs to the PlsY family. As to quaternary structure, probably interacts with PlsX.

It is found in the cell inner membrane. It catalyses the reaction an acyl phosphate + sn-glycerol 3-phosphate = a 1-acyl-sn-glycero-3-phosphate + phosphate. Its pathway is lipid metabolism; phospholipid metabolism. Its function is as follows. Catalyzes the transfer of an acyl group from acyl-phosphate (acyl-PO(4)) to glycerol-3-phosphate (G3P) to form lysophosphatidic acid (LPA). This enzyme utilizes acyl-phosphate as fatty acyl donor, but not acyl-CoA or acyl-ACP. The protein is Glycerol-3-phosphate acyltransferase of Prochlorococcus marinus (strain MIT 9515).